Consider the following 628-residue polypeptide: Cystathionine gamma-synthase-like enzyme iboG2 (628 aa).

Residue Tyr313 coordinates substrate. Position 417 is an N6-(pyridoxal phosphate)lysine (Lys417).

The protein belongs to the trans-sulfuration enzymes family. Requires pyridoxal 5'-phosphate as cofactor.

The protein operates within secondary metabolite biosynthesis. In terms of biological role, cystathionine gamma-synthase-like enzyme; part of the gene cluster that mediates the biosynthesis of the psychoactive metabolites ibotenic acid and muscimol. The first committed step is glutamate hydroxylation by the 2-oxoglutarate-dependent dioxygenase iboH, and the last step is decarboxylation of ibotenic acid to muscimol by the decarboxylase iboD. The order of the intermediate reactions is somewhat ambiguous. IboA likely activates the carboxylic acid at position 5 to introduce an amide bond, and the flavin monooxygenase iboF generates the N-O bond. There are several options for the latter step. One option is that iboF directly hydroxylates the amide nitrogen formed by iboA to produce a hydroxamic acid species. Another option is that iboF hydroxylates an external N-containing compound, whose resulting N-O bond is subsequently introduced into the hydroxyglutamate scaffold. The paralogous PLP-dependent cystathionine gamma-synthase-like enzymes iboG1 and iboG2 are likely involved in substitution of the OH group at position 3 by the O-N moiety. The first cyclic intermediate is most probably tricholomic acid which is likely desaturated to ibotenic acid by the cytochrome P450 monooxygenase iboC. The sequence is that of Cystathionine gamma-synthase-like enzyme iboG2 from Amanita muscaria (strain Koide BX008).